We begin with the raw amino-acid sequence, 370 residues long: Uroporphyrinogen decarboxylase (370 aa).

Residues 29–33, D79, Y155, S210, and H342 each bind substrate; that span reads RQAGR.

This sequence belongs to the uroporphyrinogen decarboxylase family. In terms of assembly, homodimer.

The protein localises to the cytoplasm. It catalyses the reaction uroporphyrinogen III + 4 H(+) = coproporphyrinogen III + 4 CO2. Its pathway is porphyrin-containing compound metabolism; protoporphyrin-IX biosynthesis; coproporphyrinogen-III from 5-aminolevulinate: step 4/4. In terms of biological role, catalyzes the decarboxylation of four acetate groups of uroporphyrinogen-III to yield coproporphyrinogen-III. The protein is Uroporphyrinogen decarboxylase of Acidovorax ebreus (strain TPSY) (Diaphorobacter sp. (strain TPSY)).